We begin with the raw amino-acid sequence, 162 residues long: Probable metalloprotease y4jG (162 aa).

The region spanning 9-147 is the MPN domain; that stretch reads TVALPRDCVS…YRLDAKANWN (139 aa). Residues His-94, His-96, and Asp-107 each contribute to the Zn(2+) site.

It belongs to the peptidase M67B family.

The polypeptide is Probable metalloprotease y4jG (Sinorhizobium fredii (strain NBRC 101917 / NGR234)).